The sequence spans 197 residues: Glycerol-3-phosphate acyltransferase (197 aa).

5 helical membrane-spanning segments follow: residues 1-21 (MDFI…GLLI), 50-70 (LGFA…VLAA), 82-102 (IVCL…YLGF), 112-132 (LGVF…VFAA), and 159-179 (GASQ…WIKH).

This sequence belongs to the PlsY family. As to quaternary structure, probably interacts with PlsX.

It is found in the cell inner membrane. The catalysed reaction is an acyl phosphate + sn-glycerol 3-phosphate = a 1-acyl-sn-glycero-3-phosphate + phosphate. It participates in lipid metabolism; phospholipid metabolism. Its function is as follows. Catalyzes the transfer of an acyl group from acyl-phosphate (acyl-PO(4)) to glycerol-3-phosphate (G3P) to form lysophosphatidic acid (LPA). This enzyme utilizes acyl-phosphate as fatty acyl donor, but not acyl-CoA or acyl-ACP. The protein is Glycerol-3-phosphate acyltransferase of Desulfotalea psychrophila (strain LSv54 / DSM 12343).